Reading from the N-terminus, the 473-residue chain is Glutamine synthetase (473 aa).

The 85-residue stretch at 18-102 (NNIKWVDLQF…VLTKVFWGGG (85 aa)) folds into the GS beta-grasp domain. The GS catalytic domain occupies 110 to 473 (PRGIAEEAEK…PMEIYQYLDS (364 aa)). 2 residues coordinate Mg(2+): glutamate 133 and glutamate 135. Glutamate 207 is a binding site for ATP. Mg(2+) is bound by residues glutamate 212 and glutamate 220. L-glutamate contacts are provided by residues 264-265 (NG) and glycine 265. Histidine 269 contacts Mg(2+). Residues 271–273 (HFS) and serine 273 contribute to the ATP site. L-glutamate-binding residues include arginine 324, glutamate 330, and arginine 342. ATP-binding residues include arginine 342, arginine 347, and lysine 357. Glutamate 362 serves as a coordination point for Mg(2+). Arginine 364 lines the L-glutamate pocket.

The protein belongs to the glutamine synthetase family. As to quaternary structure, oligomer of 12 subunits arranged in the form of two hexagons. It depends on Mg(2+) as a cofactor. Mn(2+) is required as a cofactor.

It is found in the cytoplasm. The catalysed reaction is L-glutamate + NH4(+) + ATP = L-glutamine + ADP + phosphate + H(+). Its activity is regulated as follows. Strongly inhibited by glycine and L-alanine. AMP at 10 mM displays a very weak inhibitory effect. The activity of this enzyme is not controlled by adenylation. Probably involved in nitrogen metabolism via ammonium assimilation. Catalyzes the ATP-dependent biosynthesis of glutamine from glutamate and ammonia. The sequence is that of Glutamine synthetase from Sulfolobus acidocaldarius (strain ATCC 33909 / DSM 639 / JCM 8929 / NBRC 15157 / NCIMB 11770).